A 142-amino-acid polypeptide reads, in one-letter code: Large ribosomal subunit protein uL11 (142 aa).

It belongs to the universal ribosomal protein uL11 family. In terms of assembly, part of the ribosomal stalk of the 50S ribosomal subunit. Interacts with L10 and the large rRNA to form the base of the stalk. L10 forms an elongated spine to which L12 dimers bind in a sequential fashion forming a multimeric L10(L12)X complex. Post-translationally, one or more lysine residues are methylated.

Functionally, forms part of the ribosomal stalk which helps the ribosome interact with GTP-bound translation factors. The polypeptide is Large ribosomal subunit protein uL11 (Klebsiella pneumoniae subsp. pneumoniae (strain ATCC 700721 / MGH 78578)).